Consider the following 233-residue polypeptide: Apoptosis regulator Bcl-2 (233 aa).

The short motif at 10-30 (DNREIVLKYIHYKLSQRGYDW) is the BH4 element. A disordered region spans residues 32 to 86 (AGEDRPPVPPAPAPAAAPAAVAAAGASSHHRPEPPGSAAASEVPPAEGLRPAPPG). The BH3 signature appears at 87-101 (VHLALRQAGDEFSRR). A BH1 motif is present at residues 130 to 149 (ELFRDGVNWGRIVAFFEFGG). Positions 181 to 196 (NWIQDNGGWDAFVELY) match the BH2 motif. A helical transmembrane segment spans residues 208-228 (WISLKTILSLVLVGACITLGA).

It belongs to the Bcl-2 family. As to quaternary structure, forms homodimers, and heterodimers with BAX, BAD, BAK and Bcl-X(L). Heterodimerization with BAX requires intact BH1 and BH2 motifs, and is necessary for anti-apoptotic activity. Also interacts with APAF1 and RAF-1. In adult chicken expressed, in thymus, spleen, kidney, heart, ovary and brain, with the highest levels in the thymus. In the embryo, highly levels expressed in all tissues with high levels in the bursa of Fabricius.

It is found in the mitochondrion outer membrane. The protein resides in the nucleus membrane. Its subcellular location is the endoplasmic reticulum membrane. The protein localises to the cytoplasm. Suppresses apoptosis in a variety of cell systems including factor-dependent lymphohematopoietic and neural cells. Regulates cell death by controlling the mitochondrial membrane permeability. Appears to function in a feedback loop system with caspases. Inhibits caspase activity either by preventing the release of cytochrome c from the mitochondria and/or by binding to the apoptosis-activating factor (APAF-1). The chain is Apoptosis regulator Bcl-2 (BCL2) from Gallus gallus (Chicken).